Reading from the N-terminus, the 317-residue chain is Ribosomal protein L11 methyltransferase (317 aa).

Positions 158, 179, 201, and 244 each coordinate S-adenosyl-L-methionine.

It belongs to the methyltransferase superfamily. PrmA family.

Its subcellular location is the cytoplasm. It carries out the reaction L-lysyl-[protein] + 3 S-adenosyl-L-methionine = N(6),N(6),N(6)-trimethyl-L-lysyl-[protein] + 3 S-adenosyl-L-homocysteine + 3 H(+). Its function is as follows. Methylates ribosomal protein L11. This is Ribosomal protein L11 methyltransferase from Streptococcus pyogenes serotype M6 (strain ATCC BAA-946 / MGAS10394).